Here is a 2344-residue protein sequence, read N- to C-terminus: Pecanex-like protein 1 (2344 aa).

Helical transmembrane passes span 33–53 (ALHL…YMAL) and 57–77 (MIIV…LKMV). Disordered stretches follow at residues 101 to 163 (QRAK…GSSR), 271 to 290 (SHSY…SSSA), 306 to 692 (QQQR…TRAR), and 749 to 837 (VTRS…VQSR). Residues 143-163 (SSRNSYAGLDPSNQIGSGSSR) are compositionally biased toward polar residues. Over residues 272–282 (HSYRKEHRPRG) the composition is skewed to basic residues. The segment covering 328 to 343 (RESSAGKSCPPAQSQP) has biased composition (polar residues). Residues 372–390 (SLRSLSTRSSGSTESYCSG) show a composition bias toward low complexity. Over residues 396-406 (NSTLSSYKSEQ) the composition is skewed to polar residues. Composition is skewed to basic and acidic residues over residues 416 to 458 (LSEH…DKTA), 508 to 522 (RPPE…EQSE), and 531 to 547 (RVCK…DVRP). Positions 557–572 (TSAHKPGRRRTGKKRA) are enriched in basic residues. Positions 616 to 638 (SIHSAHQFSSDSSSSATSHSCQS) are enriched in low complexity. Positions 749–758 (VTRSRNSLPS) are enriched in polar residues. 2 stretches are compositionally biased toward low complexity: residues 770 to 781 (AATGAAQASEEA) and 817 to 835 (LSLQ…VKVQ). 3 helical membrane passes run 1010–1030 (ILAV…LIQG), 1035–1055 (IWVF…LKSV), and 1069–1089 (IIAY…WLLD). Asparagine 1094 carries an N-linked (GlcNAc...) asparagine glycan. The chain crosses the membrane as a helical span at residues 1119–1139 (LVIVFTLCFPIVFFIGLLPQV). A glycan (N-linked (GlcNAc...) asparagine) is linked at asparagine 1158. Helical transmembrane passes span 1163-1183 (LLAA…LYGL), 1196-1216 (HVPV…YHLS), 1269-1289 (LVVC…TVFT), and 1297-1317 (YVLY…LPQV). N-linked (GlcNAc...) asparagine glycans are attached at residues asparagine 1582, asparagine 1723, asparagine 1985, and asparagine 2075. The tract at residues 2051 to 2123 (EDSDTGGGTS…SSLVRQSPAR (73 aa)) is disordered. 2 stretches are compositionally biased toward polar residues: residues 2061-2081 (CPGN…QGST) and 2095-2118 (PTTS…SLVR). N-linked (GlcNAc...) asparagine glycosylation is found at asparagine 2231, asparagine 2237, and asparagine 2263.

The protein belongs to the pecanex family.

It localises to the membrane. This chain is Pecanex-like protein 1, found in Mus musculus (Mouse).